We begin with the raw amino-acid sequence, 2458 residues long: Acetyl-CoA carboxylase 2 (2458 aa).

The residue at position 35 (Ser35) is a Phosphoserine. Residues 35–155 (SKSEANLIPS…SPSKEDKKQA (121 aa)) are disordered. The span at 51–60 (SDNSGETPQR) shows a compositional bias: polar residues. Thr70 carries the post-translational modification Phosphothreonine. Residues 77–87 (ASHKGPKDAGR) show a composition bias toward basic and acidic residues. Phosphoserine is present on residues Ser91 and Ser95. Over residues 103-146 (PLSSSDAAPSPELQANGTGTQGLEATDTNGLSSSARPQGQQAGS) the composition is skewed to polar residues. 5 positions are modified to phosphoserine: Ser169, Ser175, Ser192, Ser195, and Ser200. Residues 174–193 (SSDEDSVAGSSRESTRKGSR) are disordered. Thr207 carries the post-translational modification Phosphothreonine. Ser220 carries the phosphoserine modification. Ser222 carries the phosphoserine; by AMPK modification. Residues 259–761 (VIEKVLIANN…DTGWLDYLIA (503 aa)) form the Biotin carboxylation domain. The region spanning 414 to 609 (DDLQQGKRIS…LPAAQLQIAM (196 aa)) is the ATP-grasp domain. ATP is bound at residue 458–463 (GGGGKG). A Phosphoserine modification is found at Ser469. Positions 567, 580, and 582 each coordinate Mg(2+). 3 residues coordinate Mn(2+): Glu567, Glu580, and Asn582. The active site involves Arg584. Thr753 carries the post-translational modification Phosphothreonine. One can recognise a Biotinyl-binding domain in the interval 888–962 (FEKENDPTVL…EAGCVVARLE (75 aa)). Lys929 bears the N6-biotinyllysine mark. Ser1340 is modified (phosphoserine). Position 1342 is a phosphothreonine (Thr1342). A phosphoserine mark is found at Ser1360 and Ser1405. Positions 1695–2025 (PYVTKDLLQA…DNHSPVPIIT (331 aa)) constitute a CoA carboxyltransferase N-terminal domain. The carboxyltransferase stretch occupies residues 1695–2345 (PYVTKDLLQA…EDQVKQEILQ (651 aa)). Positions 1934, 2238, and 2240 each coordinate CoA. Residues 2029-2345 (PIDREIEFLP…EDQVKQEILQ (317 aa)) enclose the CoA carboxyltransferase C-terminal domain.

As to quaternary structure, monomer, homodimer, and homotetramer. Forms filamentous polymers. Interacts with MID1IP1; interaction with MID1IP1 promotes oligomerization and increases its activity in a citrate-dependent manner. It depends on biotin as a cofactor. Mg(2+) serves as cofactor. Requires Mn(2+) as cofactor. In terms of processing, the biotin cofactor is covalently attached to the central biotinyl-binding domain and is required for the catalytic activity. Post-translationally, phosphorylation at Ser-222 by AMPK inactivates the enzyme. Required for the maintenance of skeletal muscle lipid and glucose homeostasis. As to expression, widely expressed with highest levels in heart, skeletal muscle, liver, adipose tissue, mammary gland, adrenal gland and colon. Isoform 3 is expressed in skeletal muscle, adipose tissue and liver (at protein level). Isoform 3 is detected at high levels in adipose tissue with lower levels in heart, liver, skeletal muscle and testis.

Its subcellular location is the mitochondrion. It carries out the reaction hydrogencarbonate + acetyl-CoA + ATP = malonyl-CoA + ADP + phosphate + H(+). The protein operates within lipid metabolism; malonyl-CoA biosynthesis; malonyl-CoA from acetyl-CoA: step 1/1. Activity is increased by oligomerization of the protein into filaments. The oligomerization and the activity of the enzyme are inhibited by phosphorylation at Ser-222. Inhibited by its product, malonyl-CoA. Activated by citrate. Activation by MID1IP1 is citrate-dependent. Soraphen A, inhibits the enzyme by preventing the formation of active filamentous oligomers. Its function is as follows. Mitochondrial enzyme that catalyzes the carboxylation of acetyl-CoA to malonyl-CoA and plays a central role in fatty acid metabolism. Catalyzes a 2 steps reaction starting with the ATP-dependent carboxylation of the biotin carried by the biotin carboxyl carrier (BCC) domain followed by the transfer of the carboxyl group from carboxylated biotin to acetyl-CoA. Through the production of malonyl-CoA that allosterically inhibits carnitine palmitoyltransferase 1 at the mitochondria, negatively regulates fatty acid oxidation. Together with its cytosolic isozyme ACACA, which is involved in de novo fatty acid biosynthesis, promotes lipid storage. The protein is Acetyl-CoA carboxylase 2 of Homo sapiens (Human).